Reading from the N-terminus, the 564-residue chain is Dihydroxy-acid dehydratase (564 aa).

Residues 1–10 are compositionally biased toward basic residues; the sequence is MTDTRTKRRM. The disordered stretch occupies residues 1 to 23; that stretch reads MTDTRTKRRMNWNSHHITQGDER. Cys-57 contributes to the [2Fe-2S] cluster binding site. Position 89 (Asp-89) interacts with Mg(2+). Cys-130 is a [2Fe-2S] cluster binding site. Asp-131 and Lys-132 together coordinate Mg(2+). Lys-132 is subject to N6-carboxylysine. Residue Cys-202 coordinates [2Fe-2S] cluster. Residue Glu-454 coordinates Mg(2+). The active-site Proton acceptor is Ser-480.

It belongs to the IlvD/Edd family. As to quaternary structure, homodimer. Requires [2Fe-2S] cluster as cofactor. Mg(2+) serves as cofactor.

The enzyme catalyses (2R)-2,3-dihydroxy-3-methylbutanoate = 3-methyl-2-oxobutanoate + H2O. The catalysed reaction is (2R,3R)-2,3-dihydroxy-3-methylpentanoate = (S)-3-methyl-2-oxopentanoate + H2O. It participates in amino-acid biosynthesis; L-isoleucine biosynthesis; L-isoleucine from 2-oxobutanoate: step 3/4. Its pathway is amino-acid biosynthesis; L-valine biosynthesis; L-valine from pyruvate: step 3/4. In terms of biological role, functions in the biosynthesis of branched-chain amino acids. Catalyzes the dehydration of (2R,3R)-2,3-dihydroxy-3-methylpentanoate (2,3-dihydroxy-3-methylvalerate) into 2-oxo-3-methylpentanoate (2-oxo-3-methylvalerate) and of (2R)-2,3-dihydroxy-3-methylbutanoate (2,3-dihydroxyisovalerate) into 2-oxo-3-methylbutanoate (2-oxoisovalerate), the penultimate precursor to L-isoleucine and L-valine, respectively. The sequence is that of Dihydroxy-acid dehydratase from Deinococcus geothermalis (strain DSM 11300 / CIP 105573 / AG-3a).